Consider the following 291-residue polypeptide: GTPase Era (291 aa).

Residues Lys-2–Lys-167 form the Era-type G domain. A G1 region spans residues Gly-10–Ser-17. A GTP-binding site is contributed by Gly-10 to Ser-17. The tract at residues Asn-36–Arg-40 is G2. The interval Asp-57–Gly-60 is G3. GTP is bound by residues Asp-57–Leu-61 and Asn-116–Asp-119. A G4 region spans residues Asn-116–Asp-119. A G5 region spans residues Tyr-146–Ser-148. One can recognise a KH type-2 domain in the interval Tyr-186–Lys-274.

The protein belongs to the TRAFAC class TrmE-Era-EngA-EngB-Septin-like GTPase superfamily. Era GTPase family. Monomer.

It is found in the cytoplasm. The protein resides in the cell inner membrane. An essential GTPase that binds both GDP and GTP, with rapid nucleotide exchange. Plays a role in 16S rRNA processing and 30S ribosomal subunit biogenesis and possibly also in cell cycle regulation and energy metabolism. The polypeptide is GTPase Era (Campylobacter jejuni subsp. jejuni serotype O:6 (strain 81116 / NCTC 11828)).